A 354-amino-acid chain; its full sequence is Serum paraoxonase/lactonase 3 (354 aa).

N-linked (GlcNAc...) asparagine glycosylation occurs at asparagine 29. A disulfide bridge links cysteine 42 with cysteine 352. Ca(2+) contacts are provided by glutamate 53 and aspartate 54. Residue histidine 114 is the Proton acceptor of the active site. Isoleucine 116 serves as a coordination point for Ca(2+). Phosphoserine is present on serine 165. The Ca(2+) site is built by asparagine 167, aspartate 168, asparagine 223, aspartate 268, and asparagine 269. 2 N-linked (GlcNAc...) asparagine glycosylation sites follow: asparagine 269 and asparagine 323.

It belongs to the paraoxonase family. In terms of assembly, homodimer. The cofactor is Ca(2+). Post-translationally, the signal sequence is not cleaved.

Its subcellular location is the secreted. The protein resides in the extracellular space. It carries out the reaction a phenyl acetate + H2O = a phenol + acetate + H(+). The enzyme catalyses An aryl dialkyl phosphate + H2O = dialkyl phosphate + an aryl alcohol.. It catalyses the reaction an N-acyl-L-homoserine lactone + H2O = an N-acyl-L-homoserine + H(+). Has low activity towards the organophosphate paraxon and aromatic carboxylic acid esters. Rapidly hydrolyzes lactones such as statin prodrugs (e.g. lovastatin). Hydrolyzes aromatic lactones and 5- or 6-member ring lactones with aliphatic substituents but not simple lactones or those with polar substituents. In Homo sapiens (Human), this protein is Serum paraoxonase/lactonase 3 (PON3).